A 374-amino-acid chain; its full sequence is 4-hydroxy-3-methylbut-2-en-1-yl diphosphate synthase (flavodoxin) (374 aa).

Residues C270, C273, C305, and E312 each coordinate [4Fe-4S] cluster.

This sequence belongs to the IspG family. It depends on [4Fe-4S] cluster as a cofactor.

The catalysed reaction is (2E)-4-hydroxy-3-methylbut-2-enyl diphosphate + oxidized [flavodoxin] + H2O + 2 H(+) = 2-C-methyl-D-erythritol 2,4-cyclic diphosphate + reduced [flavodoxin]. The protein operates within isoprenoid biosynthesis; isopentenyl diphosphate biosynthesis via DXP pathway; isopentenyl diphosphate from 1-deoxy-D-xylulose 5-phosphate: step 5/6. Its function is as follows. Converts 2C-methyl-D-erythritol 2,4-cyclodiphosphate (ME-2,4cPP) into 1-hydroxy-2-methyl-2-(E)-butenyl 4-diphosphate. This is 4-hydroxy-3-methylbut-2-en-1-yl diphosphate synthase (flavodoxin) from Cellvibrio japonicus (strain Ueda107) (Pseudomonas fluorescens subsp. cellulosa).